Here is a 245-residue protein sequence, read N- to C-terminus: Biosynthetic peptidoglycan transglycosylase (245 aa).

Residues 20 to 42 form a helical membrane-spanning segment; that stretch reads VYAGSVFAGAWLATQLFYLAQIA.

It belongs to the glycosyltransferase 51 family.

It localises to the cell inner membrane. It carries out the reaction [GlcNAc-(1-&gt;4)-Mur2Ac(oyl-L-Ala-gamma-D-Glu-L-Lys-D-Ala-D-Ala)](n)-di-trans,octa-cis-undecaprenyl diphosphate + beta-D-GlcNAc-(1-&gt;4)-Mur2Ac(oyl-L-Ala-gamma-D-Glu-L-Lys-D-Ala-D-Ala)-di-trans,octa-cis-undecaprenyl diphosphate = [GlcNAc-(1-&gt;4)-Mur2Ac(oyl-L-Ala-gamma-D-Glu-L-Lys-D-Ala-D-Ala)](n+1)-di-trans,octa-cis-undecaprenyl diphosphate + di-trans,octa-cis-undecaprenyl diphosphate + H(+). It participates in cell wall biogenesis; peptidoglycan biosynthesis. In terms of biological role, peptidoglycan polymerase that catalyzes glycan chain elongation from lipid-linked precursors. This Burkholderia lata (strain ATCC 17760 / DSM 23089 / LMG 22485 / NCIMB 9086 / R18194 / 383) protein is Biosynthetic peptidoglycan transglycosylase.